The sequence spans 1598 residues: Transposon Ty2-LR2 Gag-Pol polyprotein (1598 aa).

Composition is skewed to polar residues over residues 1–11 (MESQQLHQNPH), 19–39 (ASVTSKEVPSNQDPLAVSASN), and 49–60 (KVNSQEETTPGT). Disordered stretches follow at residues 1-88 (MESQ…YQQH) and 359-449 (QHSE…SNDE). The interval 295–397 (ENNINVSDRL…SSKPRAAKAH (103 aa)) is RNA-binding. A compositionally biased stretch (low complexity) spans 369–381 (TSPNTTNTKVTTR). Composition is skewed to polar residues over residues 399–408 (IATSSKFSRV) and 415–435 (ESTVSSQYLSDDNELSLGQQQ). The active-site For protease activity; shared with dimeric partner is Asp-457. An integrase-type zinc finger-like region spans residues 579-636 (NVNKSKSVNKYPYPLIHRMLGHANFRSIQKSLKKNAVTYLKESDIEWSNASTYQCPDC). Residues 656-831 (ESYEPFQYLH…AGLDITTILP (176 aa)) form the Integrase catalytic domain. Positions 667 and 732 each coordinate Mg(2+). 3 stretches are compositionally biased toward polar residues: residues 915-927 (SFIEQNETEQSYD), 1009-1034 (ESDTTSPRHSSTFTARNQNRPGSTNE), and 1065-1082 (QRNSDTNIKYRTTNSTPS). Disordered regions lie at residues 915–934 (SFIEQNETEQSYDQNKESDH), 1004–1034 (MGGTVESDTTSPRHSSTFTARNQNRPGSTNE), 1059–1135 (TEEP…KSSK), 1146–1165 (LPLPDLTHKSPTDTSDVSKD), and 1170–1205 (HSRQTNSSLGGMDDSNVLTTTKSKKRSLEDNETEIE). Positions 1151–1165 (LTHKSPTDTSDVSKD) are enriched in basic and acidic residues. Positions 1193 to 1227 (KKRSLEDNETEIEVSRDTWNNKNMRSLEPPRSKKR) match the Bipartite nuclear localization signal motif. Residues 1353–1491 (NDYYITQLDI…DILGLEIKYQ (139 aa)) enclose the Reverse transcriptase Ty1/copia-type domain. Residues Asp-1361, Asp-1442, and Asp-1443 each coordinate Mg(2+).

In terms of assembly, the capsid protein forms a homotrimer, from which the VLPs are assembled. The protease is a homodimer, whose active site consists of two apposed aspartic acid residues. Initially, virus-like particles (VLPs) are composed of the structural unprocessed proteins Gag and Gag-Pol, and also contain the host initiator methionine tRNA (tRNA(i)-Met) which serves as a primer for minus-strand DNA synthesis, and a dimer of genomic Ty RNA. Processing of the polyproteins occurs within the particle and proceeds by an ordered pathway, called maturation. First, the protease (PR) is released by autocatalytic cleavage of the Gag-Pol polyprotein, and this cleavage is a prerequisite for subsequent processing at the remaining sites to release the mature structural and catalytic proteins. Maturation takes place prior to the RT reaction and is required to produce transposition-competent VLPs.

The protein localises to the cytoplasm. The protein resides in the nucleus. The enzyme catalyses DNA(n) + a 2'-deoxyribonucleoside 5'-triphosphate = DNA(n+1) + diphosphate. The catalysed reaction is Endonucleolytic cleavage to 5'-phosphomonoester.. Functionally, capsid protein (CA) is the structural component of the virus-like particle (VLP), forming the shell that encapsulates the retrotransposons dimeric RNA genome. The particles are assembled from trimer-clustered units and there are holes in the capsid shells that allow for the diffusion of macromolecules. CA also has nucleocapsid-like chaperone activity, promoting primer tRNA(i)-Met annealing to the multipartite primer-binding site (PBS), dimerization of Ty2 RNA and initiation of reverse transcription. The aspartyl protease (PR) mediates the proteolytic cleavages of the Gag and Gag-Pol polyproteins after assembly of the VLP. In terms of biological role, reverse transcriptase/ribonuclease H (RT) is a multifunctional enzyme that catalyzes the conversion of the retro-elements RNA genome into dsDNA within the VLP. The enzyme displays a DNA polymerase activity that can copy either DNA or RNA templates, and a ribonuclease H (RNase H) activity that cleaves the RNA strand of RNA-DNA heteroduplexes during plus-strand synthesis and hydrolyzes RNA primers. The conversion leads to a linear dsDNA copy of the retrotransposon that includes long terminal repeats (LTRs) at both ends. Its function is as follows. Integrase (IN) targets the VLP to the nucleus, where a subparticle preintegration complex (PIC) containing at least integrase and the newly synthesized dsDNA copy of the retrotransposon must transit the nuclear membrane. Once in the nucleus, integrase performs the integration of the dsDNA into the host genome. This chain is Transposon Ty2-LR2 Gag-Pol polyprotein (TY2B-LR2), found in Saccharomyces cerevisiae (strain ATCC 204508 / S288c) (Baker's yeast).